The primary structure comprises 178 residues: Large ribosomal subunit protein uL16 (178 aa).

Belongs to the universal ribosomal protein uL16 family.

The chain is Large ribosomal subunit protein uL16 from Pyrobaculum calidifontis (strain DSM 21063 / JCM 11548 / VA1).